A 229-amino-acid polypeptide reads, in one-letter code: 2-C-methyl-D-erythritol 4-phosphate cytidylyltransferase (229 aa).

This sequence belongs to the IspD/TarI cytidylyltransferase family. IspD subfamily.

It carries out the reaction 2-C-methyl-D-erythritol 4-phosphate + CTP + H(+) = 4-CDP-2-C-methyl-D-erythritol + diphosphate. It participates in isoprenoid biosynthesis; isopentenyl diphosphate biosynthesis via DXP pathway; isopentenyl diphosphate from 1-deoxy-D-xylulose 5-phosphate: step 2/6. Its function is as follows. Catalyzes the formation of 4-diphosphocytidyl-2-C-methyl-D-erythritol from CTP and 2-C-methyl-D-erythritol 4-phosphate (MEP). The protein is 2-C-methyl-D-erythritol 4-phosphate cytidylyltransferase of Neisseria meningitidis serogroup C / serotype 2a (strain ATCC 700532 / DSM 15464 / FAM18).